A 190-amino-acid chain; its full sequence is Histone-arginine methyltransferase METTL23 (190 aa).

Belongs to the methyltransferase superfamily. METTL23 family. In terms of assembly, interacts with HSPA5, HSP90B1, TUBULIN, UGGT1 and UGGT2. Interacts with TET3. Interacts with STPG4.

It is found in the nucleus. It localises to the cytoplasm. It carries out the reaction L-arginyl-[protein] + 2 S-adenosyl-L-methionine = N(omega),N(omega)-dimethyl-L-arginyl-[protein] + 2 S-adenosyl-L-homocysteine + 2 H(+). In terms of biological role, histone methyltransferase that dimethylates histone H3 at 'Arg-17', forming asymmetric dimethylarginine (H3R17me2a), leading to activate transcription via chromatin remodeling. Maternal factor involved in epigenetic chromatin reprogramming of the paternal genome in the zygote: mediates H3R17me2a, promoting histone H3.3 incorporation in the male pronucleus, leading to TET3 recruitment and subsequent DNA demethylation. The protein is Histone-arginine methyltransferase METTL23 of Homo sapiens (Human).